Consider the following 154-residue polypeptide: Bacterial ferritin (154 aa).

The Ferritin-like diiron domain maps to 1 to 145 (MQGNQAVVDY…QQLRLIELIG (145 aa)). Positions 18, 51, 54, 93, 127, and 130 each coordinate Fe cation.

It belongs to the bacterioferritin family. As to quaternary structure, heterooligomer of 24 subunits, arranged as 12 dimers, that are packed together to form an approximately spherical molecule with a central cavity, in which large amounts of iron can be deposited.

The enzyme catalyses 4 Fe(2+) + O2 + 4 H(+) = 4 Fe(3+) + 2 H2O. The catalysed reaction is Fe(2+)(in) = Fe(2+)(out). Functionally, iron-storage protein, whose ferroxidase center binds Fe(2+), oxidizes it using dioxygen to Fe(3+), and participates in the subsequent Fe(3+) oxide mineral core formation within the central cavity of the BFR protein shell. The chain is Bacterial ferritin (bfrA) from Neisseria meningitidis serogroup A / serotype 4A (strain DSM 15465 / Z2491).